The chain runs to 360 residues: Photosystem II protein D1 (360 aa).

3 helical membrane passes run 30–47, 119–134, and 143–157; these read YVGW…AAAI, HFLI…QWEL, and WICV…AAFA. Histidine 119 contributes to the chlorophyll a binding site. Tryptophan 127 is a binding site for pheophytin a. 2 residues coordinate [CaMn4O5] cluster: aspartate 171 and glutamate 190. Residues 198-219 traverse the membrane as a helical segment; it reads FHMAGVAGMFGGSLFSAMHGSL. Histidine 199 is a binding site for chlorophyll a. Residues histidine 216 and 265–266 each bind a quinone; that span reads SF. Position 216 (histidine 216) interacts with Fe cation. Histidine 273 is a Fe cation binding site. A helical transmembrane segment spans residues 275–289; it reads FLAIFPVVCVWLTSM. [CaMn4O5] cluster-binding residues include histidine 333, glutamate 334, aspartate 343, and alanine 345. The propeptide occupies 346–360; that stretch reads AAESTSVALVAPSIG.

This sequence belongs to the reaction center PufL/M/PsbA/D family. PSII is composed of 1 copy each of membrane proteins PsbA, PsbB, PsbC, PsbD, PsbE, PsbF, PsbH, PsbI, PsbJ, PsbK, PsbL, PsbM, PsbT, PsbX, PsbY, Psb30/Ycf12, peripheral proteins PsbO, CyanoQ (PsbQ), PsbU, PsbV and a large number of cofactors. It forms dimeric complexes. It depends on The D1/D2 heterodimer binds P680, chlorophylls that are the primary electron donor of PSII, and subsequent electron acceptors. It shares a non-heme iron and each subunit binds pheophytin, quinone, additional chlorophylls, carotenoids and lipids. D1 provides most of the ligands for the Mn4-Ca-O5 cluster of the oxygen-evolving complex (OEC). There is also a Cl(-1) ion associated with D1 and D2, which is required for oxygen evolution. The PSII complex binds additional chlorophylls, carotenoids and specific lipids. as a cofactor. Post-translationally, tyr-162 forms a radical intermediate that is referred to as redox-active TyrZ, YZ or Y-Z. C-terminally processed by CtpA; processing is essential to allow assembly of the oxygen-evolving complex and thus photosynthetic growth.

Its subcellular location is the cellular thylakoid membrane. It carries out the reaction 2 a plastoquinone + 4 hnu + 2 H2O = 2 a plastoquinol + O2. In terms of biological role, photosystem II (PSII) is a light-driven water:plastoquinone oxidoreductase that uses light energy to abstract electrons from H(2)O, generating O(2) and a proton gradient subsequently used for ATP formation. It consists of a core antenna complex that captures photons, and an electron transfer chain that converts photonic excitation into a charge separation. The D1/D2 (PsbA/PsbD) reaction center heterodimer binds P680, the primary electron donor of PSII as well as several subsequent electron acceptors. This is Photosystem II protein D1 from Prochlorococcus marinus (strain SARG / CCMP1375 / SS120).